The following is a 161-amino-acid chain: Protein-export protein SecB (161 aa).

It belongs to the SecB family. Homotetramer, a dimer of dimers. One homotetramer interacts with 1 SecA dimer.

It is found in the cytoplasm. In terms of biological role, one of the proteins required for the normal export of preproteins out of the cell cytoplasm. It is a molecular chaperone that binds to a subset of precursor proteins, maintaining them in a translocation-competent state. It also specifically binds to its receptor SecA. This is Protein-export protein SecB from Bradyrhizobium diazoefficiens (strain JCM 10833 / BCRC 13528 / IAM 13628 / NBRC 14792 / USDA 110).